Reading from the N-terminus, the 143-residue chain is Small ribosomal subunit protein uS12 (143 aa).

Basic residues predominate over residues M1 to D19. The segment at M1–A23 is disordered. A 3-hydroxyproline modification is found at P62.

This sequence belongs to the universal ribosomal protein uS12 family. Component of the 40S small ribosomal subunit. Hydroxylation at Pro-62 affects translation termination efficiency.

The protein resides in the cytoplasm. The protein localises to the cytosol. It localises to the rough endoplasmic reticulum. The chain is Small ribosomal subunit protein uS12 (RpS23) from Drosophila melanogaster (Fruit fly).